A 628-amino-acid polypeptide reads, in one-letter code: Glutamyl-tRNA(Gln) amidotransferase subunit E (628 aa).

It belongs to the GatB/GatE family. GatE subfamily. In terms of assembly, heterodimer of GatD and GatE.

The enzyme catalyses L-glutamyl-tRNA(Gln) + L-glutamine + ATP + H2O = L-glutaminyl-tRNA(Gln) + L-glutamate + ADP + phosphate + H(+). Its function is as follows. Allows the formation of correctly charged Gln-tRNA(Gln) through the transamidation of misacylated Glu-tRNA(Gln) in organisms which lack glutaminyl-tRNA synthetase. The reaction takes place in the presence of glutamine and ATP through an activated gamma-phospho-Glu-tRNA(Gln). The GatDE system is specific for glutamate and does not act on aspartate. The polypeptide is Glutamyl-tRNA(Gln) amidotransferase subunit E (Pyrococcus furiosus (strain ATCC 43587 / DSM 3638 / JCM 8422 / Vc1)).